Consider the following 243-residue polypeptide: VQ motif-containing protein 33 (243 aa).

Over residues 1 to 16 the composition is skewed to polar residues; the sequence is MEVSTSSMSSKPEQMQ. The segment at 1 to 49 is disordered; the sequence is MEVSTSSMSSKPEQMQNPPPMISSPRFQPQIISPHHHDQHQHLSNPYPT. A VQ motif is present at residues 59–68; it reads FKQVVQMLTG. 2 disordered regions span residues 69–98 and 138–162; these read SSTD…SIPP and FTGG…SENI. Phosphoserine is present on residues Ser-83 and Ser-95. Polar residues predominate over residues 84 to 98; the sequence is PVNNNNKGSSFSIPP. The residue at position 139 (Thr-139) is a Phosphothreonine. Ser-148, Ser-152, Ser-165, Ser-167, and Ser-178 each carry phosphoserine. Residues 149–162 show a composition bias toward low complexity; it reads PRFSPRNSSSSENI. Positions 180–243 are disordered; the sequence is VTPLRSNDDP…FPVASPARNS (64 aa). The residue at position 181 (Thr-181) is a Phosphothreonine. The span at 191–201 shows a compositional bias: polar residues; sequence NKSSPLSLGNS. 2 positions are modified to phosphoserine: Ser-218 and Ser-221. Thr-222 carries the phosphothreonine modification. Ser-238 is modified (phosphoserine).

Phosphorylated on serine and threonine residues by MPK6.

It is found in the nucleus. May modulate WRKY transcription factor activities. This chain is VQ motif-containing protein 33, found in Arabidopsis thaliana (Mouse-ear cress).